The primary structure comprises 161 residues: Arachidonate 5-lipoxygenase-activating protein (161 aa).

Residues 1–8 (MDQEAVGN) are Lumenal-facing. Residues 9–30 (VVLLAIVTLISVVQNAFFAHKV) traverse the membrane as a helical segment. Residues 31-52 (ELESKAQSGRSFQRTGTLAFER) lie on the Cytoplasmic side of the membrane. A helical transmembrane segment spans residues 53–77 (VYTANQNCVDAYPTFLVVLWTAGLL). The Lumenal segment spans residues 78 to 80 (CSQ). A helical membrane pass occupies residues 81–102 (VPAAFAGLMYLFVRQKYFVGYL). The Cytoplasmic portion of the chain corresponds to 103-107 (GERTQ). Residues 108 to 115 (STPGYIFG) lie within the membrane without spanning it. A helical transmembrane segment spans residues 116-128 (KRIILFLFLMSLA). Over 129 to 161 (GILNHYLIFFFGSDFENYIRTITTTISPLLLIP) the chain is Lumenal.

This sequence belongs to the MAPEG family. In terms of assembly, homotrimer. Interacts with LTC4S and ALOX5.

It localises to the nucleus membrane. It is found in the endoplasmic reticulum membrane. In terms of biological role, required for leukotriene biosynthesis by ALOX5 (5-lipoxygenase). Anchors ALOX5 to the membrane. Binds arachidonic acid, and could play an essential role in the transfer of arachidonic acid to ALOX5. Binds to MK-886, a compound that blocks the biosynthesis of leukotrienes. The protein is Arachidonate 5-lipoxygenase-activating protein (Alox5ap) of Rattus norvegicus (Rat).